A 351-amino-acid chain; its full sequence is MNPPKSAPDAQGLSYRDAGVDIDAGDALVDKIKPFAKKTLRDGVLGGIGGFGALFEVPKKYREPVLVSGTDGVGTKLKLAFHLNKHDTVGQDLVAMSVNDILVQGAEPLFFLDYFACGKLDVETAATVVKGIATGCELAGCALIGGETAEMPGMYPDGEYDLAGFAVGAVEKSKIIDGSTIAEGDVVLGLASSGIHSNGFSLVRKIIERANPDLSADFHGRSLADALMAPTRIYVKPLLALMEKIAVKGMAHITGGGLVENIPRVLRDGLTAELDQHAWPLPPLFQWLQQHGGVADAEMHRVFNCGIGMAVIVSAADADDALRQLADAGEQVWKIGTVRASREGEAQTVVV.

This sequence belongs to the AIR synthase family.

It is found in the cytoplasm. It catalyses the reaction 2-formamido-N(1)-(5-O-phospho-beta-D-ribosyl)acetamidine + ATP = 5-amino-1-(5-phospho-beta-D-ribosyl)imidazole + ADP + phosphate + H(+). It functions in the pathway purine metabolism; IMP biosynthesis via de novo pathway; 5-amino-1-(5-phospho-D-ribosyl)imidazole from N(2)-formyl-N(1)-(5-phospho-D-ribosyl)glycinamide: step 2/2. This is Phosphoribosylformylglycinamidine cyclo-ligase from Burkholderia mallei (strain NCTC 10247).